Here is a 922-residue protein sequence, read N- to C-terminus: MTKTLHARPSAATDTTFAPPVITGTATEDALEILFHALLDVARRHDPELEDVLHGRADISSFTPEMLARALQVQGIWFQLVSIAEQNAAMRRRRHVERDQGREALNGSFAKVLAEASARGIGPQQIHALLKDLRIRPTITAHPTEGKRVTVLEKLRRIYLVLRELELPRWTERERNGLMNELRDQIELIWMTGELHLEKATVEREVAWGLHFFDETLFEMLPEMLLSLEESLAQYYPDETFEVPPFFQFGSWIGGDRDGNPYVTASVTRETLQRNALASLRRYRDGITHLGRVLSITERSLPVPETFRSELAHMLAESGDARAIANRNPGEAYRQFLSCVLRKLEATIARNKGARSVGPDYPSADGLINDLRTLEKGLADAKCGALATDIVRPVRRMVEIFRFSTVRLDLRENSTRTTKTLHALWKLRNGDREPPALDSPAWKDWLLTELARPRTPETSFEDFADRLPDDARETLATFALVGEMRDTLDREAFGAFILSMTRSTVDVLGAYLLAKEAGIFLDTTGTEICPLPIVPLFETIDDLRAAPAIMKELLGIPVVRRSTRWQGGVQEVMIGYSDSNKDGGFIASNWELYKAQVRLTTLGNHLGVPIAFFHGRGGSVSRGGVPTHRGIAAQPPGSIQGRFRITEQGEVVSFKYANRGTAAYQMELLAASVFEHALLSEGNGNGSRAEFDDALEALSGASRAAYVNLLQAEGLVDYFQAASPLDEISLLNIGSRPARRFGAKSLSDLRAIPWVFAWSQNRHVITGWYGVGSGLKSFIDVRGEAGEALLRRLFRDCRVFRLVLDEVEKTLLMVDLEIARDYAGLVEDAGIRARIFGMIEAEYALTREMVLRVSGDSELAQRFPQFSERLRGRLPTINQVSREQVELLRRYRSETDEDKREAVKSALLLSINCIAVGFGATG.

The interval 1–20 (MTKTLHARPSAATDTTFAPP) is disordered. Active-site residues include His-142 and Lys-581.

This sequence belongs to the PEPCase type 1 family. Mg(2+) is required as a cofactor.

The enzyme catalyses oxaloacetate + phosphate = phosphoenolpyruvate + hydrogencarbonate. Functionally, forms oxaloacetate, a four-carbon dicarboxylic acid source for the tricarboxylic acid cycle. In Methylorubrum extorquens (strain ATCC 14718 / DSM 1338 / JCM 2805 / NCIMB 9133 / AM1) (Methylobacterium extorquens), this protein is Phosphoenolpyruvate carboxylase (ppc).